We begin with the raw amino-acid sequence, 389 residues long: Cytochrome f (389 aa).

The signal sequence occupies residues 1-42; the sequence is MTTFFISKVNGPVNKSLIWLKIHIYEFFLLKFMLLFPPTVCS. Positions 105, 125, 128, and 129 each coordinate heme. Residues 355–375 form a helical membrane-spanning segment; the sequence is LQALIVFFIFVILTQLFLVLK.

The protein belongs to the cytochrome f family. In terms of assembly, the 4 large subunits of the cytochrome b6-f complex are cytochrome b6, subunit IV (17 kDa polypeptide, petD), cytochrome f and the Rieske protein, while the 4 small subunits are PetG, PetL, PetM and PetN. The complex functions as a dimer. It depends on heme as a cofactor.

Its subcellular location is the plastid. It localises to the chloroplast thylakoid membrane. Component of the cytochrome b6-f complex, which mediates electron transfer between photosystem II (PSII) and photosystem I (PSI), cyclic electron flow around PSI, and state transitions. This chain is Cytochrome f, found in Pleurastrum terricola (Filamentous green alga).